Reading from the N-terminus, the 47-residue chain is Delta-ctenitoxin-Pr2d (47 aa).

Disulfide bonds link Cys-3–Cys-17, Cys-10–Cys-23, Cys-14–Cys-46, Cys-16–Cys-31, and Cys-25–Cys-29.

Expressed by the venom gland.

It localises to the secreted. Blocks voltage-gated sodium channels (Nav). Causes rapid general spastic paralysis and death when injected in mice at dose levels of less than 2 ug per mouse. This Phoneutria reidyi (Brazilian Amazonian armed spider) protein is Delta-ctenitoxin-Pr2d.